Consider the following 805-residue polypeptide: Ubiquitin carboxyl-terminal hydrolase 10 (805 aa).

Residues Asp139–Tyr170 are disordered. Over residues Asn143 to Gly153 the composition is skewed to polar residues. A USP domain is found at Arg422 to Val802. Cys431 (nucleophile) is an active-site residue. The interval His561–Arg593 is disordered. Over residues Val569–Gln580 the composition is skewed to basic and acidic residues. His756 serves as the catalytic Proton acceptor.

This sequence belongs to the peptidase C19 family. USP10 subfamily.

The protein resides in the cytoplasm. It is found in the nucleus. It catalyses the reaction Thiol-dependent hydrolysis of ester, thioester, amide, peptide and isopeptide bonds formed by the C-terminal Gly of ubiquitin (a 76-residue protein attached to proteins as an intracellular targeting signal).. Functionally, hydrolase that can remove conjugated ubiquitin from target proteins such as p53/tp53, rps2/us5, rps3/us3, rps10/eS10, becn1, snx3 and cftr. Acts as an essential regulator of p53/tp53 stability: in unstressed cells, specifically deubiquitinates p53/tp53 in the cytoplasm, leading to counteracts MDM2 action and stabilize p53/tp53. Following DNA damage, translocates to the nucleus and deubiquitinates p53/tp53, leading to regulate the p53/TP53-dependent DNA damage response. Component of a regulatory loop that controls autophagy and p53/tp53 levels. Plays a key role in 40S ribosome subunit recycling when a ribosome has stalled during translation: acts both by inhibiting formation of stress granules, which store stalled translation pre-initiation complexes, and mediating deubiquitination of 40S ribosome subunits. Deubiquitinates cftr in early endosomes, enhancing its endocytic recycling. This chain is Ubiquitin carboxyl-terminal hydrolase 10 (usp10), found in Xenopus tropicalis (Western clawed frog).